The following is an 83-amino-acid chain: Keratin-associated protein 6-1 (83 aa).

An RPT 1-1 repeat occupies 9-15 (YGGLGCG). An RPT 1-2 repeat occupies 19 to 25 (YGGLGCG). The RPT 2-1 repeat unit spans residues 44-55 (GYGYGSRSLCGS). Residues 56 to 67 (GYGYGSRSLCGS) form an RPT 2-2 repeat.

Belongs to the KRTAP type 6 family. As to quaternary structure, interacts with wool keratins.

In terms of biological role, in the wool cortex, wool keratin intermediate filaments are embedded in an interfilamentous matrix, consisting of hair keratin-associated proteins (KRTAP), which are essential for the formation of a rigid and resistant wool shaft through their extensive disulfide bond cross-linking with abundant cysteine residues of wool keratins. The matrix proteins include the high-sulfur and high-glycine-tyrosine keratins. This chain is Keratin-associated protein 6-1 (KRTAP6-1), found in Ovis aries (Sheep).